A 1368-amino-acid chain; its full sequence is Alpha-latrotoxin-Lg1a (1368 aa).

The segment at 217–236 (VLYAILYGTQTYVSVMFFLL) is helix H8 is the probable transmembrane region of the tetrameric pore inserted in the target cell membrane. Cys392 and Cys1044 are disulfide-bonded. ANK repeat units follow at residues 469–500 (QGRT…DINQ), 504–533 (KGYT…SVNS), 538–568 (FLQT…NINE), 572–601 (DGFT…DVNV), 605–635 (KGLT…DINA), 639–669 (NNMT…NANA), 674–704 (GLLS…NYNL), 708–737 (GDIT…NINQ), 741–770 (EKYT…NLEA), 774–803 (TGAT…NWRE), 807–837 (NGQM…VLDI), 841–870 (NLDT…KVNT), 874–903 (KGQA…NVYI), 907–936 (DGLN…KFEW), 953–981 (ISHF…GHYS), 982–1011 (ICSP…SVDG), 1013–1042 (KPDT…KVNH), 1046–1075 (NGMT…DFRR), 1079–1109 (LDAT…NINI), and 1115–1144 (NKET…DENI). Residues 1174–1177 (KFRR) are furin-like endopeptidase recognition region. A propeptide spanning residues 1178–1368 (EYKSSNGEHD…GETLHLFHES (191 aa)) is cleaved from the precursor.

Belongs to the cationic peptide 01 (latrotoxin) family. 03 (alpha-latrotoxin) subfamily. As to quaternary structure, homotetramer in membranes. Expressed in venom gland, cephalothorax, and abdomen tissues from both males and females.

Its subcellular location is the secreted. The protein resides in the target cell membrane. Presynaptic neurotoxin that causes massive release of neurotransmitters from vertebrate (but not invertebrate) nerve terminals and endocrine cells via a complex mechanism involving activation of receptor(s) and toxin insertion into the plasma membrane with subsequent pore formation. Binds to neurexin-1-alpha (NRXN1) in a calcium dependent manner, adhesion G protein-coupled receptor L1 (ADGRL1, also termed latrophilin-1 and calcium-independent receptor of latrotoxin (CIRL)), and receptor-type tyrosine-protein phosphatase S (PTPRS), also termed PTP sigma. NRXN1 and PTPRS are suggested to provide a platform for binding and subsequent pore formation events. In contrast, binding to ADGRL1 does not involve oligomerization and channel formation, but direct downstream stimulation of the synaptic fusion machinery. The sequence is that of Alpha-latrotoxin-Lg1a from Latrodectus geometricus (Brown widow spider).